Reading from the N-terminus, the 550-residue chain is Palmdelphin (550 aa).

M1 is modified (N-acetylmethionine). Residues 2 to 106 adopt a coiled-coil conformation; sequence EEAELVKERL…LQISTNEEAI (105 aa). K125 is covalently cross-linked (Glycyl lysine isopeptide (Lys-Gly) (interchain with G-Cter in SUMO2)). Position 135 is a phosphoserine (S135). Residue K179 forms a Glycyl lysine isopeptide (Lys-Gly) (interchain with G-Cter in SUMO1); alternate linkage. A Glycyl lysine isopeptide (Lys-Gly) (interchain with G-Cter in SUMO2); alternate cross-link involves residue K179. A compositionally biased stretch (basic and acidic residues) spans 248-259; it reads ERNSKSPTEYHE. The interval 248-280 is disordered; it reads ERNSKSPTEYHEPVYANPFCRPTTPQREKVTPG. At T271 the chain carries Phosphothreonine. S321, S370, S384, and S385 each carry phosphoserine. Disordered regions lie at residues 356–393 and 463–528; these read VMQDKYTPSPKSGLSPSRALVEKSERQSSSPPCQEDEK and HPIA…IAGD. Over residues 483-494 the composition is skewed to basic and acidic residues; sequence KRAEVNPHENTN. Residues S497, S514, and S519 each carry the phosphoserine modification.

This sequence belongs to the paralemmin family. Interacts with GLUL. Post-translationally, phosphorylated.

It localises to the cytoplasm. The protein localises to the cell projection. It is found in the dendrite. Its subcellular location is the dendritic spine. This is Palmdelphin (PALMD) from Bos taurus (Bovine).